The primary structure comprises 282 residues: UDP-3-O-acyl-N-acetylglucosamine deacetylase (282 aa).

3 residues coordinate Zn(2+): H80, H240, and D244. The Proton donor role is filled by H267.

Belongs to the LpxC family. Requires Zn(2+) as cofactor.

It is found in the plastid. Its subcellular location is the chloroplast. The enzyme catalyses a UDP-3-O-[(3R)-3-hydroxyacyl]-N-acetyl-alpha-D-glucosamine + H2O = a UDP-3-O-[(3R)-3-hydroxyacyl]-alpha-D-glucosamine + acetate. Its pathway is glycolipid biosynthesis; lipid IV(A) biosynthesis; lipid IV(A) from (3R)-3-hydroxytetradecanoyl-[acyl-carrier-protein] and UDP-N-acetyl-alpha-D-glucosamine: step 2/6. In terms of biological role, catalyzes the hydrolysis of UDP-3-O-myristoyl-N-acetylglucosamine to form UDP-3-O-myristoylglucosamine and acetate. Involved in the biosynthesis of lipid A, a phosphorylated glycolipid that in bacteria anchors the lipopolysaccharide to the outer membrane of the cell. The target for the lipopolysaccharides produced in the chloroplast could either be the cell envelope of the eukaryote or the plastid membrane. This Cyanidium caldarium (Red alga) protein is UDP-3-O-acyl-N-acetylglucosamine deacetylase.